Reading from the N-terminus, the 359-residue chain is Probable RNA methyltransferase RPD_2859 (359 aa).

The Proton acceptor role is filled by glutamate 99. In terms of domain architecture, Radical SAM core spans 105 to 330 (RFDGHTACIS…PVVVRDTQGR (226 aa)). Residues cysteine 112 and cysteine 336 are joined by a disulfide bond. The [4Fe-4S] cluster site is built by cysteine 119, cysteine 123, and cysteine 126. S-adenosyl-L-methionine contacts are provided by residues 162–163 (GE), serine 194, 217–219 (SLH), and asparagine 293. The active-site S-methylcysteine intermediate is cysteine 336.

Belongs to the radical SAM superfamily. RlmN family. The cofactor is [4Fe-4S] cluster.

The protein localises to the cytoplasm. This Rhodopseudomonas palustris (strain BisB5) protein is Probable RNA methyltransferase RPD_2859.